The primary structure comprises 1014 residues: Regulator of telomere elongation helicase 1 homolog (1014 aa).

The Helicase ATP-binding domain occupies 7 to 324 (AGIPVHFPFE…KEMLLELEKA (318 aa)). 42–49 (SPTGTGKT) is an ATP binding site. 4 residues coordinate [4Fe-4S] cluster: Cys-147, Cys-165, Cys-174, and Cys-210. Positions 253–256 (DEAH) match the DEAH box motif. The residue at position 873 (Thr-873) is a Phosphothreonine. The interval 891–917 (TDMVKTEPGTSNSCSYGNTSSSGSDSR) is disordered. A compositionally biased stretch (low complexity) spans 899–917 (GTSNSCSYGNTSSSGSDSR).

It belongs to the helicase family. RAD3/XPD subfamily.

The protein resides in the nucleus. It carries out the reaction ATP + H2O = ADP + phosphate + H(+). Functionally, a probable ATP-dependent DNA helicase implicated in DNA repair and the maintenance of genomic stability. Acts as an anti-recombinase to counteract toxic recombination and limit crossover during meiosis. Regulates meiotic recombination and crossover homeostasis by physically dissociating strand invasion events and thereby promotes noncrossover repair by meiotic synthesis dependent strand annealing (SDSA) as well as disassembly of D loop recombination intermediates. The polypeptide is Regulator of telomere elongation helicase 1 homolog (Drosophila mojavensis (Fruit fly)).